Consider the following 202-residue polypeptide: PITH domain-containing protein 1 (202 aa).

The region spanning serine 11–proline 184 is the PITH domain.

The protein belongs to the PITHD1 family.

This is PITH domain-containing protein 1 from Dictyostelium discoideum (Social amoeba).